A 505-amino-acid chain; its full sequence is MLGSWRAFSEMFCHLRPWRRFCLRKVLPPWLHYSRALSGAEAINALRPFYFAVHPDFFGQHPREREVNENSLKRLSVYLENLQKPGFKSLKPTQLTFYIREKTAQNSSEGQEPVSTTGFRAVRFTLHSSDLLSTVLYILNSCSLPVEHVQSLNTNVHSQPLKEATGMPDRPIKWHRSYYSFTGFKDPDEDLEHVSRVETTLTSWLGSNGKGAVKKLKNSLPLRKELDRLKNELSELLQLSDIRWQRGWGVAHRCSQLHSLSRLAQQNLEPLQNAKGCTIVFTDRSGMSALGHVMLGTMDVHHHWTRLFESLPNYFDLQRRMSALEDQISHLLGGIQVVYIEELQPALTLDEYYSLLDTFYNQLQRSRAPPRPQSLSGLQMILSRYAPSLHELGHFNIPALSDPASLQSFMRTKAQQARENMRRREKLKVIENELIQASTRKFSLEKLYKEPSISSRQMVDCCKRLLEQSLPYLHGMHLCVSHFYSVMQDGDLCIPWNWKKGEAMK.

A coiled-coil region spans residues leucine 216 to arginine 243.

In terms of tissue distribution, expressed in peripheral blood leukocytes, mainly in T-lymphocytes.

It localises to the mitochondrion. Functionally, may regulate T-cell apoptosis. This is T-cell activation inhibitor, mitochondrial (Tcaim) from Rattus norvegicus (Rat).